The sequence spans 189 residues: Apolipoprotein D (189 aa).

The first 21 residues, 1–21, serve as a signal peptide directing secretion; it reads MAPTLLLLLPALAGLISVAQG. Gln22 is subject to Pyrrolidone carboxylic acid. 2 disulfide bridges follow: Cys29-Cys135 and Cys62-Cys186. Residues Asn66 and Asn99 are each glycosylated (N-linked (GlcNAc...) asparagine).

This sequence belongs to the calycin superfamily. Lipocalin family. Homodimer. In terms of tissue distribution, most heavily expressed in adrenal gland, lung, brain, testis and spleen.

It is found in the secreted. APOD occurs in the macromolecular complex with lecithin-transport and binding of bilin. Appears to be able to transport a variety of ligands in a number of different contexts. The polypeptide is Apolipoprotein D (APOD) (Oryctolagus cuniculus (Rabbit)).